A 229-amino-acid chain; its full sequence is ATP synthase subunit a (229 aa).

The next 6 membrane-spanning stretches (helical) occupy residues 16-36 (YAHV…GAAA), 81-101 (YIPF…LGMI), 110-130 (NMNT…FQGV), 142-162 (FMGP…VSHI), 175-195 (VMMG…IGVP), and 196-216 (IPFY…FTLL).

It belongs to the ATPase A chain family. In terms of assembly, F-type ATPases have 2 components, CF(1) - the catalytic core - and CF(0) - the membrane proton channel. CF(1) has five subunits: alpha(3), beta(3), gamma(1), delta(1), epsilon(1). CF(0) has three main subunits: a(1), b(2) and c(9-12). The alpha and beta chains form an alternating ring which encloses part of the gamma chain. CF(1) is attached to CF(0) by a central stalk formed by the gamma and epsilon chains, while a peripheral stalk is formed by the delta and b chains.

The protein localises to the cell inner membrane. In terms of biological role, key component of the proton channel; it plays a direct role in the translocation of protons across the membrane. This chain is ATP synthase subunit a, found in Bdellovibrio bacteriovorus (strain ATCC 15356 / DSM 50701 / NCIMB 9529 / HD100).